A 327-amino-acid polypeptide reads, in one-letter code: Ornithine carbamoyltransferase 2, anabolic (327 aa).

Residues arginine 109 and histidine 136–glutamine 139 contribute to the carbamoyl phosphate site. L-ornithine is bound by residues asparagine 168, aspartate 232, and serine 236–methionine 237. Residues cysteine 273–leucine 274 and arginine 313 contribute to the carbamoyl phosphate site.

This sequence belongs to the aspartate/ornithine carbamoyltransferase superfamily. OTCase family. As to quaternary structure, homotrimer.

The protein resides in the cytoplasm. It catalyses the reaction carbamoyl phosphate + L-ornithine = L-citrulline + phosphate + H(+). The protein operates within amino-acid biosynthesis; L-arginine biosynthesis; L-arginine from L-ornithine and carbamoyl phosphate: step 1/3. Plays an important role in the survival and pathogenicity of P.syringae. Phaseolotoxin is a virulence factor that inhibits the catalysis of the host OTCase. Phaseolotoxin-producing bacteria do not suffer autointoxication because they possess the anabolic OTCase ArgK which can function even in the presence of phaseolotoxin. Reversibly catalyzes the transfer of the carbamoyl group from carbamoyl phosphate (CP) to the N(epsilon) atom of ornithine (ORN) to produce L-citrulline, which is a substrate for argininosuccinate synthetase, the enzyme involved in the final step in arginine biosynthesis. The protein is Ornithine carbamoyltransferase 2, anabolic of Pseudomonas savastanoi pv. phaseolicola (Pseudomonas syringae pv. phaseolicola).